The following is a 509-amino-acid chain: Maturase K (509 aa).

The protein belongs to the intron maturase 2 family. MatK subfamily.

The protein resides in the plastid. Its subcellular location is the chloroplast. In terms of biological role, usually encoded in the trnK tRNA gene intron. Probably assists in splicing its own and other chloroplast group II introns. The polypeptide is Maturase K (Dalea purpurea (Violet prairie clover)).